We begin with the raw amino-acid sequence, 838 residues long: Valine--tRNA ligase (838 aa).

The 'HIGH' region motif lies at 46 to 56 (PNLTGTLHIGH). The short motif at 514-518 (KMSKS) is the 'KMSKS' region element. K517 lines the ATP pocket. Residues 768 to 838 (VDNAANNLAH…HLIAKLTKAE (71 aa)) are a coiled coil.

It belongs to the class-I aminoacyl-tRNA synthetase family. ValS type 1 subfamily. In terms of assembly, monomer.

The protein resides in the cytoplasm. It carries out the reaction tRNA(Val) + L-valine + ATP = L-valyl-tRNA(Val) + AMP + diphosphate. Functionally, catalyzes the attachment of valine to tRNA(Val). As ValRS can inadvertently accommodate and process structurally similar amino acids such as threonine, to avoid such errors, it has a 'posttransfer' editing activity that hydrolyzes mischarged Thr-tRNA(Val) in a tRNA-dependent manner. This Mycoplasma pneumoniae (strain ATCC 29342 / M129 / Subtype 1) (Mycoplasmoides pneumoniae) protein is Valine--tRNA ligase.